A 172-amino-acid chain; its full sequence is Crossover junction endodeoxyribonuclease RuvC (172 aa).

Active-site residues include Asp11, Glu71, and Asp143. Mg(2+) contacts are provided by Asp11, Glu71, and Asp143.

This sequence belongs to the RuvC family. In terms of assembly, homodimer which binds Holliday junction (HJ) DNA. The HJ becomes 2-fold symmetrical on binding to RuvC with unstacked arms; it has a different conformation from HJ DNA in complex with RuvA. In the full resolvosome a probable DNA-RuvA(4)-RuvB(12)-RuvC(2) complex forms which resolves the HJ. Mg(2+) serves as cofactor.

The protein localises to the cytoplasm. It carries out the reaction Endonucleolytic cleavage at a junction such as a reciprocal single-stranded crossover between two homologous DNA duplexes (Holliday junction).. Its function is as follows. The RuvA-RuvB-RuvC complex processes Holliday junction (HJ) DNA during genetic recombination and DNA repair. Endonuclease that resolves HJ intermediates. Cleaves cruciform DNA by making single-stranded nicks across the HJ at symmetrical positions within the homologous arms, yielding a 5'-phosphate and a 3'-hydroxyl group; requires a central core of homology in the junction. The consensus cleavage sequence is 5'-(A/T)TT(C/G)-3'. Cleavage occurs on the 3'-side of the TT dinucleotide at the point of strand exchange. HJ branch migration catalyzed by RuvA-RuvB allows RuvC to scan DNA until it finds its consensus sequence, where it cleaves and resolves the cruciform DNA. The sequence is that of Crossover junction endodeoxyribonuclease RuvC from Brucella anthropi (strain ATCC 49188 / DSM 6882 / CCUG 24695 / JCM 21032 / LMG 3331 / NBRC 15819 / NCTC 12168 / Alc 37) (Ochrobactrum anthropi).